The chain runs to 434 residues: Probable oxaloacetate decarboxylase beta chain (434 aa).

A run of 9 helical transmembrane segments spans residues Ile-13 to Ile-35, Val-122 to Val-144, Thr-159 to Asn-181, Ile-186 to Ile-208, Ala-223 to Thr-245, Ile-266 to Gly-288, Thr-308 to Ser-327, Thr-339 to Ala-361, and Phe-403 to Val-425.

It belongs to the GcdB/MmdB/OadB family. Heterotrimer of an alpha, a beta and a gamma subunit. The cofactor is Na(+).

Its subcellular location is the cell membrane. It catalyses the reaction oxaloacetate + 2 Na(+)(in) + H(+) = pyruvate + 2 Na(+)(out) + CO2. In terms of biological role, catalyzes the decarboxylation of oxaloacetate coupled to Na(+) translocation. The chain is Probable oxaloacetate decarboxylase beta chain (oadB) from Pasteurella multocida (strain Pm70).